The primary structure comprises 770 residues: Cullin-1 (770 aa).

In terms of domain architecture, Cullin neddylation spans 700 to 761 (DRKLQIQAAI…EKEYLMRVEG (62 aa)). K714 is covalently cross-linked (Glycyl lysine isopeptide (Lys-Gly) (interchain with G-Cter in NEDD8)).

The protein belongs to the cullin family. Part of a complex that includes culA, fbxA and regA. Formation of this complex is dependent on the MAP kinase erkB. In terms of processing, neddylated; which enhances the ubiquitination activity of SCF.

The protein operates within protein modification; protein ubiquitination. Its function is as follows. Probable core component of cullin-based SCF-like E3 ubiquitin-protein ligase complexes which mediate the ubiquitination and subsequent proteasomal degradation of target proteins. The E3 ubiquitin-protein ligase activity of the complex is dependent on the neddylation of the cullin subunit. Required at several stages during development. CulA and fbxA regulate multicellular development by targeting regA for degradation via a pathway that requires erkB function, leading to an increase in cAMP and PKA activity. The protein is Cullin-1 (culA) of Dictyostelium discoideum (Social amoeba).